The chain runs to 513 residues: Interferon-induced, double-stranded RNA-activated protein kinase (513 aa).

At Ala-2 the chain carries N-acetylalanine. The DRBM 1 domain occupies 8–76 (FYVDKLNKYS…AKLAVEILDN (69 aa)). Residue Lys-68 forms a Glycyl lysine isopeptide (Lys-Gly) (interchain with G-Cter in ISG15) linkage. Ser-82 is subject to Phosphoserine. Thr-84 bears the Phosphothreonine mark. Residues 95–162 (NYIGLVNSFA…AKNAYQKLSE (68 aa)) enclose the DRBM 2 domain. A Phosphotyrosine; by autocatalysis modification is found at Tyr-96. A Glycyl lysine isopeptide (Lys-Gly) (interchain with G-Cter in ISG15) cross-link involves residue Lys-154. Tyr-157 carries the post-translational modification Phosphotyrosine; by autocatalysis. Thr-227 is subject to Phosphothreonine. The interaction with TRAF5 stretch occupies residues 235-513 (DFEDIEEIGS…ISEKKKRNTC (279 aa)). Residues 236–502 (FEDIEEIGSG…EILKTLAEWK (267 aa)) form the Protein kinase domain. An ATP-binding site is contributed by 242–250 (IGSGGFGQV). The residue at position 262 (Tyr-262) is a Phosphotyrosine; by autocatalysis. Lys-265 is an ATP binding site. Asp-373 (proton acceptor) is an active-site residue. Phosphothreonine; by autocatalysis is present on residues Thr-406 and Thr-411. Ser-416 carries the post-translational modification Phosphoserine.

It belongs to the protein kinase superfamily. Ser/Thr protein kinase family. GCN2 subfamily. As to quaternary structure, homodimer. Interacts with DNAJC3. Interacts with STRBP. Forms a complex with FANCA, FANCC, FANCG and HSP70. Interacts with ADAR/ADAR1. The inactive form interacts with NCK1 and GSN. Interacts (via the kinase catalytic domain) with STAT3 (via SH2 domain), TRAF2 (C-terminus), TRAF5 (C-terminus) and TRAF6 (C-terminus). Interacts with MAP2K6, IKBKB/IKKB, IRS1, NPM1, TARBP2, NLRP1, NLRP3, NLRC4 and AIM2. Interacts (via DRBM 1 domain) with DUS2L (via DRBM domain). Interacts with DHX9 (via N-terminus) and this interaction is dependent upon activation of the kinase. In terms of processing, autophosphorylated on several Ser, Thr and Tyr residues. Autophosphorylation of Thr-411 is dependent on Thr-406 and is stimulated by dsRNA binding and dimerization. Autophosphorylation apparently leads to the activation of the kinase. Tyrosine autophosphorylation is essential for efficient dsRNA-binding, dimerization, and kinase activation.

It localises to the cytoplasm. It is found in the nucleus. The protein localises to the perinuclear region. It catalyses the reaction L-seryl-[protein] + ATP = O-phospho-L-seryl-[protein] + ADP + H(+). It carries out the reaction L-threonyl-[protein] + ATP = O-phospho-L-threonyl-[protein] + ADP + H(+). The catalysed reaction is L-tyrosyl-[protein] + ATP = O-phospho-L-tyrosyl-[protein] + ADP + H(+). With respect to regulation, initially produced in an inactive form and is activated by binding to viral dsRNA, which causes dimerization and autophosphorylation in the activation loop and stimulation of function. ISGylation can activate it in the absence of viral infection. Can also be activated by heparin, pro-inflammatory stimuli, growth factors, cytokines, oxidative stress and the cellular protein PRKRA. Activity is markedly stimulated by manganese ions. Activation is blocked by the cellular proteins TARBP2, DUS2L, NPM1, NCK1 and ADAR. Functionally, IFN-induced dsRNA-dependent serine/threonine-protein kinase that phosphorylates the alpha subunit of eukaryotic translation initiation factor 2 (EIF2S1/eIF-2-alpha) and plays a key role in the innate immune response to viral infection. Inhibits viral replication via the integrated stress response (ISR): EIF2S1/eIF-2-alpha phosphorylation in response to viral infection converts EIF2S1/eIF-2-alpha in a global protein synthesis inhibitor, resulting to a shutdown of cellular and viral protein synthesis, while concomitantly initiating the preferential translation of ISR-specific mRNAs, such as the transcriptional activator ATF4. Exerts its antiviral activity on a wide range of DNA and RNA viruses. Also involved in the regulation of signal transduction, apoptosis, cell proliferation and differentiation: phosphorylates other substrates including p53/TP53, PPP2R5A, DHX9, ILF3 and IRS1. In addition to serine/threonine-protein kinase activity, also has tyrosine-protein kinase activity and phosphorylates CDK1 at 'Tyr-4' upon DNA damage, facilitating its ubiquitination and proteasomal degradation. Either as an adapter protein and/or via its kinase activity, can regulate various signaling pathways (p38 MAP kinase, NF-kappa-B and insulin signaling pathways) and transcription factors (JUN, STAT1, STAT3, IRF1, ATF3) involved in the expression of genes encoding pro-inflammatory cytokines and IFNs. Activates the NF-kappa-B pathway via interaction with IKBKB and TRAF family of proteins and activates the p38 MAP kinase pathway via interaction with MAP2K6. Can act as both a positive and negative regulator of the insulin signaling pathway (ISP). Negatively regulates ISP by inducing the inhibitory phosphorylation of insulin receptor substrate 1 (IRS1) at 'Ser-312' and positively regulates ISP via phosphorylation of PPP2R5A which activates FOXO1, which in turn up-regulates the expression of insulin receptor substrate 2 (IRS2). Can regulate NLRP3 inflammasome assembly and the activation of NLRP3, NLRP1, AIM2 and NLRC4 inflammasomes. Plays a role in the regulation of the cytoskeleton by binding to gelsolin (GSN), sequestering the protein in an inactive conformation away from actin. The chain is Interferon-induced, double-stranded RNA-activated protein kinase (Eif2ak2) from Rattus norvegicus (Rat).